A 219-amino-acid polypeptide reads, in one-letter code: Elongation factor Ts (219 aa).

Residues 82–85 (TDFV) form an involved in Mg(2+) ion dislocation from EF-Tu region.

The protein belongs to the EF-Ts family.

It localises to the cytoplasm. In terms of biological role, associates with the EF-Tu.GDP complex and induces the exchange of GDP to GTP. It remains bound to the aminoacyl-tRNA.EF-Tu.GTP complex up to the GTP hydrolysis stage on the ribosome. The chain is Elongation factor Ts from Anaeromyxobacter sp. (strain K).